A 233-amino-acid chain; its full sequence is Leucyl/phenylalanyl-tRNA--protein transferase (233 aa).

The protein belongs to the L/F-transferase family.

Its subcellular location is the cytoplasm. The enzyme catalyses N-terminal L-lysyl-[protein] + L-leucyl-tRNA(Leu) = N-terminal L-leucyl-L-lysyl-[protein] + tRNA(Leu) + H(+). It catalyses the reaction N-terminal L-arginyl-[protein] + L-leucyl-tRNA(Leu) = N-terminal L-leucyl-L-arginyl-[protein] + tRNA(Leu) + H(+). It carries out the reaction L-phenylalanyl-tRNA(Phe) + an N-terminal L-alpha-aminoacyl-[protein] = an N-terminal L-phenylalanyl-L-alpha-aminoacyl-[protein] + tRNA(Phe). Functions in the N-end rule pathway of protein degradation where it conjugates Leu, Phe and, less efficiently, Met from aminoacyl-tRNAs to the N-termini of proteins containing an N-terminal arginine or lysine. This Klebsiella pneumoniae subsp. pneumoniae (strain ATCC 700721 / MGH 78578) protein is Leucyl/phenylalanyl-tRNA--protein transferase.